The chain runs to 218 residues: Probable nicotinate-nucleotide adenylyltransferase (218 aa).

It belongs to the NadD family.

The catalysed reaction is nicotinate beta-D-ribonucleotide + ATP + H(+) = deamido-NAD(+) + diphosphate. It participates in cofactor biosynthesis; NAD(+) biosynthesis; deamido-NAD(+) from nicotinate D-ribonucleotide: step 1/1. Catalyzes the reversible adenylation of nicotinate mononucleotide (NaMN) to nicotinic acid adenine dinucleotide (NaAD). The chain is Probable nicotinate-nucleotide adenylyltransferase from Helicobacter hepaticus (strain ATCC 51449 / 3B1).